The sequence spans 602 residues: mRNA-decapping enzyme 1A (602 aa).

Position 82 is a phosphoserine (Ser-82). Residues 152–161 are compositionally biased toward basic and acidic residues; sequence RSQQAARDKQ. Disordered stretches follow at residues 152 to 174, 191 to 234, and 267 to 291; these read RSQQ…DQRP, NQMG…PSGH, and GDAS…APQS. Phosphoserine is present on residues Ser-162, Ser-199, and Ser-200. Over residues 193–229 the composition is skewed to polar residues; the sequence is MGGSNISSPGLQPSTQLSNLGSTETLEETPSGSQDKS. A phosphoserine mark is found at Ser-335 and Ser-339. A Phosphothreonine modification is found at Thr-367. Residue Ser-372 is modified to Phosphoserine. Arg-395 carries the post-translational modification Asymmetric dimethylarginine. Thr-420 bears the Phosphothreonine mark. Residues Ser-441, Ser-542, Ser-543, and Ser-545 each carry the phosphoserine modification. 2 positions are modified to phosphothreonine: Thr-548 and Thr-551.

It belongs to the DCP1 family. Forms a complex with EDC3, DCP2, DDX6 and EDC4/HEDLS, within this complex directly interacts with EDC3. Part of a cytoplasmic complex containing proteins involved in mRNA decay, including XRN1 and LSM1. Interacts with DCP1B. Interacts with DCP2. Interacts with DDX17 in an RNA-independent manner. Interacts with PNRC2. Interacts with SMAD4. Interacts with UPF1. Interacts with ZC3HAV1. Interacts with ZFP36L1. Interacts with NBDY. Interacts with DHX34; the interaction is RNA-independent. As to expression, ubiquitous, with highest expression in the spleen and testis (at protein level).

It localises to the cytoplasm. Its subcellular location is the P-body. It is found in the nucleus. It catalyses the reaction a 5'-end (N(7)-methyl 5'-triphosphoguanosine)-ribonucleoside in mRNA + H2O = N(7)-methyl-GDP + a 5'-end phospho-ribonucleoside in mRNA + 2 H(+). Its function is as follows. Necessary for the degradation of mRNAs, both in normal mRNA turnover and in nonsense-mediated mRNA decay. Removes the 7-methyl guanine cap structure from mRNA molecules, yielding a 5'-phosphorylated mRNA fragment and 7m-GDP. Contributes to the transactivation of target genes after stimulation by TGFB1. Essential for embryonic development. This Mus musculus (Mouse) protein is mRNA-decapping enzyme 1A (Dcp1a).